We begin with the raw amino-acid sequence, 99 residues long: Beta-defensin 127 (99 aa).

An N-terminal signal peptide occupies residues 1 to 20 (MGLFMIIAILLFQKPTVTEQ). 3 disulfides stabilise this stretch: cysteine 24/cysteine 53, cysteine 33/cysteine 47, and cysteine 37/cysteine 54. A propeptide spanning residues 66–99 (ITKPPRPKPATLALTLQDYVTIIENFPSLKTQST) is cleaved from the precursor.

The protein belongs to the beta-defensin family.

It is found in the secreted. Has antibacterial activity. This is Beta-defensin 127 (DEFB127) from Homo sapiens (Human).